A 788-amino-acid chain; its full sequence is Protein translocase subunit SecA 2 (788 aa).

ATP is bound by residues Gln-86, 104 to 108 (GEGKT), and Asp-493.

It belongs to the SecA family. Monomer and homodimer. Part of the essential Sec protein translocation apparatus which comprises SecA, SecYEG and auxiliary proteins SecDF. Other proteins may also be involved.

It localises to the cell membrane. The protein resides in the cytoplasm. The enzyme catalyses ATP + H2O + cellular proteinSide 1 = ADP + phosphate + cellular proteinSide 2.. Its function is as follows. Part of the Sec protein translocase complex. Interacts with the SecYEG preprotein conducting channel. Has a central role in coupling the hydrolysis of ATP to the transfer of proteins into and across the cell membrane, serving as an ATP-driven molecular motor driving the stepwise translocation of polypeptide chains across the membrane. The chain is Protein translocase subunit SecA 2 from Bacillus anthracis.